The chain runs to 66 residues: UPF0337 protein SpyM3_1723 (66 aa).

The segment covering methionine 1–isoleucine 10 has biased composition (basic and acidic residues). Positions methionine 1 to lysine 23 are disordered.

The protein belongs to the UPF0337 (CsbD) family.

The chain is UPF0337 protein SpyM3_1723 from Streptococcus pyogenes serotype M3 (strain ATCC BAA-595 / MGAS315).